The primary structure comprises 335 residues: 5-formaminoimidazole-4-carboxamide-1-(beta)-D-ribofuranosyl 5'-monophosphate synthetase (335 aa).

5-amino-1-(5-phospho-beta-D-ribosyl)imidazole-4-carboxamide-binding residues include His-21 and Ser-86. An ATP-grasp domain is found at 107–315 (RELLRWEADQ…YFDKPMDMGE (209 aa)). ATP-binding positions include 137-189 (PTEV…VPAY) and Glu-211. Asn-231 serves as a coordination point for 5-amino-1-(5-phospho-beta-D-ribosyl)imidazole-4-carboxamide. Mg(2+) contacts are provided by Glu-270 and Glu-283.

It belongs to the phosphohexose mutase family. Mg(2+) serves as cofactor. Requires Mn(2+) as cofactor.

It catalyses the reaction 5-amino-1-(5-phospho-beta-D-ribosyl)imidazole-4-carboxamide + formate + ATP = 5-formamido-1-(5-phospho-D-ribosyl)imidazole-4-carboxamide + ADP + phosphate. It participates in purine metabolism; IMP biosynthesis via de novo pathway; 5-formamido-1-(5-phospho-D-ribosyl)imidazole-4-carboxamide from 5-amino-1-(5-phospho-D-ribosyl)imidazole-4-carboxamide (formate route): step 1/1. Catalyzes the ATP- and formate-dependent formylation of 5-aminoimidazole-4-carboxamide-1-beta-d-ribofuranosyl 5'-monophosphate (AICAR) to 5-formaminoimidazole-4-carboxamide-1-beta-d-ribofuranosyl 5'-monophosphate (FAICAR) in the absence of folates. In Pyrobaculum arsenaticum (strain DSM 13514 / JCM 11321 / PZ6), this protein is 5-formaminoimidazole-4-carboxamide-1-(beta)-D-ribofuranosyl 5'-monophosphate synthetase.